The primary structure comprises 370 residues: Peptide chain release factor 1 (370 aa).

Position 237 is an N5-methylglutamine (Q237). Positions 286 to 296 (ERQRSARDATR) are enriched in basic and acidic residues. The interval 286–310 (ERQRSARDATRKSQVGTGDRSEKIR) is disordered.

Belongs to the prokaryotic/mitochondrial release factor family. Methylated by PrmC. Methylation increases the termination efficiency of RF1.

It localises to the cytoplasm. Functionally, peptide chain release factor 1 directs the termination of translation in response to the peptide chain termination codons UAG and UAA. The protein is Peptide chain release factor 1 of Anaeromyxobacter dehalogenans (strain 2CP-C).